Consider the following 42-residue polypeptide: Snaclec lebecetin subunit alpha (42 aa).

Residues 1 to 42 (DQDCLPGWSSHEGHCYKVFNLDKTWEDAEKFCTEQPSNGHLV) enclose the C-type lectin domain. An intrachain disulfide couples cysteine 4 to cysteine 15.

As to quaternary structure, heterodimer of subunits alpha and beta; disulfide-linked. Requires Ca(2+) as cofactor. Post-translationally, glycosylated. As to expression, expressed by the venom gland.

It localises to the secreted. Its function is as follows. Binds to the platelet GPIb/IX/V receptor system and inhibits ristocetin-induced platelet aggregation in human platelet-rich plasma. Strongly inhibits platelet aggregation induced by ADP, calcium ionophore, thrombin and collagen. Does not inhibit U46619-induced platelet aggregation. The polypeptide is Snaclec lebecetin subunit alpha (Macrovipera lebetinus (Levantine viper)).